The primary structure comprises 530 residues: uncharacterized protein (530 aa).

This is an uncharacterized protein from Acanthamoeba polyphaga (Amoeba).